We begin with the raw amino-acid sequence, 178 residues long: E1B protein, small T-antigen (178 aa).

It belongs to the adenoviridae E1B 19 kDa protein family.

Its subcellular location is the host cell membrane. The protein resides in the host nucleus envelope. The protein localises to the host nucleus lamina. In terms of biological role, putative adenovirus Bcl-2 homolog that inhibits apoptosis induced by TNF or FAS pathways, as well as p53-mediated apoptosis. Without E1B 19K function, virus production is compromised because of premature death of host cell. Interacts with Bax protein in cell lysates. The protein is E1B protein, small T-antigen of Human adenovirus B serotype 7 (HAdV-7).